The primary structure comprises 589 residues: V-type ATP synthase alpha chain (589 aa).

Position 232 to 239 (232 to 239) interacts with ATP; the sequence is GPFGSGKT.

The protein belongs to the ATPase alpha/beta chains family.

It catalyses the reaction ATP + H2O + 4 H(+)(in) = ADP + phosphate + 5 H(+)(out). In terms of biological role, produces ATP from ADP in the presence of a proton gradient across the membrane. The V-type alpha chain is a catalytic subunit. This chain is V-type ATP synthase alpha chain, found in Acetivibrio thermocellus (strain ATCC 27405 / DSM 1237 / JCM 9322 / NBRC 103400 / NCIMB 10682 / NRRL B-4536 / VPI 7372) (Clostridium thermocellum).